A 164-amino-acid polypeptide reads, in one-letter code: CB1 cannabinoid receptor-interacting protein 1 (164 aa).

The protein belongs to the CNRIP family. As to quaternary structure, interacts with the cannabinoid receptor CNR1 (via C-terminus). Does not interact with cannabinoid receptor CNR2.

Suppresses cannabinoid receptor CNR1-mediated tonic inhibition of voltage-gated calcium channels. Its function is as follows. Does not suppress cannabinoid receptor CNR1-mediated tonic inhibition of voltage-gated calcium channels. The chain is CB1 cannabinoid receptor-interacting protein 1 (CNRIP1) from Homo sapiens (Human).